The chain runs to 344 residues: tRNA dimethylallyltransferase (344 aa).

Gly-43 to Ser-50 is a binding site for ATP. Thr-45–Ser-50 is a substrate binding site. Positions Asp-68 to Gln-71 are interaction with substrate tRNA.

Belongs to the IPP transferase family. As to quaternary structure, monomer. It depends on Mg(2+) as a cofactor.

It catalyses the reaction adenosine(37) in tRNA + dimethylallyl diphosphate = N(6)-dimethylallyladenosine(37) in tRNA + diphosphate. Its function is as follows. Catalyzes the transfer of a dimethylallyl group onto the adenine at position 37 in tRNAs that read codons beginning with uridine, leading to the formation of N6-(dimethylallyl)adenosine (i(6)A). In Protochlamydia amoebophila (strain UWE25), this protein is tRNA dimethylallyltransferase.